The primary structure comprises 334 residues: Anthranilate phosphoribosyltransferase (334 aa).

Residues G81, 84–85 (GD), T89, 91–94 (NIST), 109–117 (KHGNRSVSS), and A121 contribute to the 5-phospho-alpha-D-ribose 1-diphosphate site. An anthranilate-binding site is contributed by G81. S93 is a Mg(2+) binding site. N112 is an anthranilate binding site. An anthranilate-binding site is contributed by R167. Mg(2+)-binding residues include D225 and E226.

The protein belongs to the anthranilate phosphoribosyltransferase family. Homodimer. It depends on Mg(2+) as a cofactor.

The catalysed reaction is N-(5-phospho-beta-D-ribosyl)anthranilate + diphosphate = 5-phospho-alpha-D-ribose 1-diphosphate + anthranilate. It participates in amino-acid biosynthesis; L-tryptophan biosynthesis; L-tryptophan from chorismate: step 2/5. Its function is as follows. Catalyzes the transfer of the phosphoribosyl group of 5-phosphorylribose-1-pyrophosphate (PRPP) to anthranilate to yield N-(5'-phosphoribosyl)-anthranilate (PRA). This is Anthranilate phosphoribosyltransferase from Histophilus somni (strain 2336) (Haemophilus somnus).